Reading from the N-terminus, the 360-residue chain is Blue-light-activated histidine kinase 1 (360 aa).

The 72-residue stretch at 38–109 (LFLETTQQTR…KLREGIAAER (72 aa)) folds into the PAS domain. The residue at position 85 (C85) is an S-4a-FMN cysteine. Residues 109–163 (RYTVVDLLNYRKDGIPFWNAVHVGPIYGEDGTLQYFYGSQWDITDIVAERRKAET) form the PAC domain. A Phosphohistidine; by autocatalysis modification is found at H173. Residues 260–303 (RSVTALGLALHELATNAVKYGALSVDAGRVEISWSREDGDVTLV) are HWE histidine kinase domain.

FMN binds covalently to cysteine after exposure to blue light and this bond is spontaneously broken in the dark.

The enzyme catalyses ATP + protein L-histidine = ADP + protein N-phospho-L-histidine.. In terms of biological role, photosensitive kinase that is involved in increased bacterial virulence upon exposure to light. The sequence is that of Blue-light-activated histidine kinase 1 from Erythrobacter litoralis (strain HTCC2594).